Here is a 178-residue protein sequence, read N- to C-terminus: uncharacterized protein (178 aa).

A run of 4 helical transmembrane segments spans residues 29–49 (AATGFCGGVLWSFVAYIAYLF), 76–96 (VISIILIGVISIGAAFLYFLL), 105–125 (PGILYGLVLWLLVFFVFNPIF), and 139–159 (IITTICIYLLYGLFVGYSISF).

It localises to the cell membrane. This is an uncharacterized protein from Bacillus subtilis (strain 168).